A 270-amino-acid polypeptide reads, in one-letter code: Tubulin-specific chaperone B (270 aa).

Residues 214 to 256 (GTVEFSSGVWIGVELDLPLGKNDGSVKGKQYFQCSPKYGCFAK) form the CAP-Gly domain.

The protein belongs to the TBCB family. In terms of assembly, supercomplex made of cofactors A to E. Cofactors A and D function by capturing and stabilizing tubulin in a quasi-native conformation. Cofactor E binds to the cofactor D-tubulin complex; interaction with cofactor C then causes the release of tubulin polypeptides that are committed to the native state.

It localises to the cytoplasm. It is found in the cytoskeleton. Binds to alpha-tubulin folding intermediates after their interaction with cytosolic chaperonin in the pathway leading from newly synthesized tubulin to properly folded heterodimer. The protein is Tubulin-specific chaperone B (tbcb) of Dictyostelium discoideum (Social amoeba).